We begin with the raw amino-acid sequence, 345 residues long: tRNA pseudouridine synthase B (345 aa).

Catalysis depends on D39, which acts as the Nucleophile.

This sequence belongs to the pseudouridine synthase TruB family. Type 1 subfamily.

It carries out the reaction uridine(55) in tRNA = pseudouridine(55) in tRNA. Its function is as follows. Responsible for synthesis of pseudouridine from uracil-55 in the psi GC loop of transfer RNAs. The sequence is that of tRNA pseudouridine synthase B from Rickettsia peacockii (strain Rustic).